Here is a 74-residue protein sequence, read N- to C-terminus: Cytochrome c oxidase assembly factor 5 (74 aa).

The CHCH domain occupies 27-65 (QSACVLQEGKSPRQCLKEGNCRALQYSFFECKRSMLDAR). A Cx10C motif motif is present at residues 30 to 41 (CVLQEGKSPRQC). 2 cysteine pairs are disulfide-bonded: C30-C57 and C41-C47. S37 is subject to Phosphoserine. The Cx9C motif motif lies at 47–57 (CRALQYSFFEC).

It belongs to the PET191 family.

Functionally, involved in an early step of the mitochondrial complex IV assembly process. The chain is Cytochrome c oxidase assembly factor 5 (Coa5) from Mus musculus (Mouse).